The chain runs to 530 residues: RNA-binding protein 39 (530 aa).

The disordered stretch occupies residues 1 to 146 (MADDIDIEAM…PVREPIDNLT (146 aa)). Ala-2 bears the N-acetylalanine mark. The span at 14–32 (PYKKDENKLSSANGHEERS) shows a compositional bias: basic and acidic residues. 2 stretches are compositionally biased toward basic residues: residues 33–56 (KKRK…KERK) and 64–95 (KKSK…RGRY). Tyr-95 bears the Phosphotyrosine mark. Ser-97 and Ser-100 each carry phosphoserine. Lys-111 participates in a covalent cross-link: Glycyl lysine isopeptide (Lys-Gly) (interchain with G-Cter in SUMO2). The residue at position 117 (Ser-117) is a Phosphoserine. Residue Lys-119 forms a Glycyl lysine isopeptide (Lys-Gly) (interchain with G-Cter in SUMO2) linkage. A compositionally biased stretch (basic residues) spans 119–130 (KLSRRRSRSKSP). A phosphoserine mark is found at Ser-121 and Ser-136. The segment covering 131–146 (FRKDKSPVREPIDNLT) has biased composition (basic and acidic residues). Position 146 is a phosphothreonine (Thr-146). In terms of domain architecture, RRM 1 spans 153–230 (RTVFCMQLAA…VPIIVQASQA (78 aa)). Lys-244 participates in a covalent cross-link: Glycyl lysine isopeptide (Lys-Gly) (interchain with G-Cter in SUMO2). The RRM 2 domain occupies 250-328 (MRLYVGSLHF…RPMKVGHVTE (79 aa)). An activating domain region spans residues 291–355 (KGYGFITFSD…RTGIDLGTTG (65 aa)). The segment at 291 to 406 (KGYGFITFSD…IDLQTRLSQQ (116 aa)) is interaction with JUN. Phosphoserine is present on residues Ser-334, Ser-337, and Ser-341. Residues 355–406 (GRLQLMARLAEGTGLQIPPAAQQALQMSGSLAFGAVAEFSFVIDLQTRLSQQ) are interaction with ESR1 and ESR2. The segment at 406 to 530 (QTEASALAAA…ATQLLVPSRR (125 aa)) is interaction with NCOA6. The RRM 3 domain occupies 445–508 (EIKDDVIEEC…KMITAAYVPL (64 aa)).

Belongs to the splicing factor SR family. In terms of assembly, interacts with NCOA6 and JUN. Interacts with ESR1 and ESR2, in the presence of estradiol (E2). Interacts with RSRC1 (via Arg/Ser-rich domain). Interacts with SF3B1. Interacts with ZNF106 (via N-terminus). Post-translationally, aryl sulfonamide anticancer drugs, such as indisulam (E7070) or E7820, promote ubiquitination and subsequent degradation by the DCX(DCAF15) complex. RBM39 degradation results in splicing defects and death in cancer cell lines. Aryl sulfonamide anticancer drugs change the substrate specificity of DCAF15 by acting as a molecular glue that promotes binding between DCAF15 and weak affinity interactor RBM39. In terms of tissue distribution, widely expressed. Highly expressed in pancreas, skeletal muscle, lung and brain. Expressed at intermediate level in kidney, liver and heart.

It localises to the nucleus speckle. RNA-binding protein that acts as a pre-mRNA splicing factor. Acts by promoting exon inclusion via regulation of exon cassette splicing. Also acts as a transcriptional coactivator for steroid nuclear receptors ESR1/ER-alpha and ESR2/ER-beta, and JUN/AP-1, independently of the pre-mRNA splicing factor activity. The polypeptide is RNA-binding protein 39 (Homo sapiens (Human)).